Here is a 409-residue protein sequence, read N- to C-terminus: Elongation factor 1-gamma (409 aa).

In terms of domain architecture, GST N-terminal spans 2 to 81 (SVGTVYGKIG…YLASLNKTRA (80 aa)). Residues 86–212 (TAEEKAKVLQ…EPLKFIDQPL (127 aa)) enclose the GST C-terminal domain. A compositionally biased stretch (basic and acidic residues) spans 219-248 (NKEAAPAKKAEKKKDEKKKNAPKPQAERPA). Residues 219–261 (NKEAAPAKKAEKKKDEKKKNAPKPQAERPAKPPKHPLASAPNG) are disordered. In terms of domain architecture, EF-1-gamma C-terminal spans 251-409 (PKHPLASAPN…REVADGKVCK (159 aa)).

In terms of assembly, EF-1 is composed of four subunits: alpha, beta, delta, and gamma.

In terms of biological role, probably plays a role in anchoring the complex to other cellular components. This is Elongation factor 1-gamma (tef3) from Schizosaccharomyces pombe (strain 972 / ATCC 24843) (Fission yeast).